The following is a 182-amino-acid chain: Pyruvoyl-dependent arginine decarboxylase (182 aa).

The residue at position 44 (serine 44) is a Pyruvic acid (Ser).

This sequence belongs to the PdaD family. The cofactor is pyruvate.

It carries out the reaction L-arginine + H(+) = agmatine + CO2. In Picrophilus torridus (strain ATCC 700027 / DSM 9790 / JCM 10055 / NBRC 100828 / KAW 2/3), this protein is Pyruvoyl-dependent arginine decarboxylase.